Here is a 123-residue protein sequence, read N- to C-terminus: Large ribosomal subunit protein bL12 (123 aa).

It belongs to the bacterial ribosomal protein bL12 family. As to quaternary structure, homodimer. Part of the ribosomal stalk of the 50S ribosomal subunit. Forms a multimeric L10(L12)X complex, where L10 forms an elongated spine to which 2 to 4 L12 dimers bind in a sequential fashion. Binds GTP-bound translation factors.

Functionally, forms part of the ribosomal stalk which helps the ribosome interact with GTP-bound translation factors. Is thus essential for accurate translation. The chain is Large ribosomal subunit protein bL12 from Clostridium kluyveri (strain NBRC 12016).